The sequence spans 363 residues: tRNA/tmRNA (uracil-C(5))-methyltransferase (363 aa).

Gln187, Tyr215, Asn220, Glu236, and Asp296 together coordinate S-adenosyl-L-methionine. Catalysis depends on Cys321, which acts as the Nucleophile. Glu355 serves as the catalytic Proton acceptor.

This sequence belongs to the class I-like SAM-binding methyltransferase superfamily. RNA M5U methyltransferase family. TrmA subfamily.

It carries out the reaction uridine(54) in tRNA + S-adenosyl-L-methionine = 5-methyluridine(54) in tRNA + S-adenosyl-L-homocysteine + H(+). The catalysed reaction is uridine(341) in tmRNA + S-adenosyl-L-methionine = 5-methyluridine(341) in tmRNA + S-adenosyl-L-homocysteine + H(+). Its function is as follows. Dual-specificity methyltransferase that catalyzes the formation of 5-methyluridine at position 54 (m5U54) in all tRNAs, and that of position 341 (m5U341) in tmRNA (transfer-mRNA). This chain is tRNA/tmRNA (uracil-C(5))-methyltransferase, found in Pseudomonas fluorescens.